We begin with the raw amino-acid sequence, 1268 residues long: SR-related and CTD-associated factor 8 (1268 aa).

The region spanning 1–139 (MEAVKTFNSE…PLLDMAAGIP (139 aa)) is the CID domain. Thr-6 is modified (phosphothreonine). Lys-18 is covalently cross-linked (Glycyl lysine isopeptide (Lys-Gly) (interchain with G-Cter in SUMO1)). Ser-273 is modified (phosphoserine). Disordered stretches follow at residues 322 to 355 (QQQPQKVTPQDSQEGAFGSEHSASPSQGSSQQHF) and 385 to 469 (EIFE…PVRS). Polar residues predominate over residues 342-354 (HSASPSQGSSQQH). Positions 394–443 (VAVRSRSRTHSRSRSRSPRKRRSRSRSGSRKRKHRKRSRSRSRERKRKSS) are enriched in basic residues. The segment covering 447–461 (SSERRAREREKERQK) has biased composition (basic and acidic residues). Residues 477–551 (TTLWVGQVDK…KVIKIAWALN (75 aa)) form the RRM domain. Phosphothreonine is present on Thr-615. Ser-617 carries the post-translational modification Phosphoserine. Positions 753-808 (AGNVFNPPSKAEPEEKVPHLTEHQIPSGENTRPVIPSDIPSSAPMLAQPPGASNTS) are disordered. Basic and acidic residues predominate over residues 763-774 (AEPEEKVPHLTE). Asymmetric dimethylarginine is present on residues Arg-915, Arg-925, and Arg-936. Positions 947 to 1063 (QRGIPPPSVL…GRDHFGRPPV (117 aa)) are disordered. The span at 961–970 (HPPPRGPFPP) shows a compositional bias: pro residues. Basic and acidic residues-rich tracts occupy residues 1009-1025 (EGDRDYRFPPIETREGI) and 1032-1063 (DVRDVVGRPIDPREGPGRPPLDGRDHFGRPPV). The residue at position 1071 (Arg-1071) is an Asymmetric dimethylarginine. The disordered stretch occupies residues 1199–1268 (ATSQRKGENV…VVESTETEGT (70 aa)). Positions 1249–1262 (GTAAGVESEAVVES) are enriched in low complexity.

As to quaternary structure, interacts with POLR2A; via C-terminal heptapeptide repeat domain (CTD) phosphorylated at 'Ser-2' and 'Ser-5'. Identified in a complex with CDC5L and other spliceosomal proteins.

Its subcellular location is the nucleus. The protein resides in the nucleus matrix. Functionally, anti-terminator protein required to prevent early mRNA termination during transcription. Together with SCAF4, acts by suppressing the use of early, alternative poly(A) sites, thereby preventing the accumulation of non-functional truncated proteins. Mechanistically, associates with the phosphorylated C-terminal heptapeptide repeat domain (CTD) of the largest RNA polymerase II subunit (POLR2A), and subsequently binds nascent RNA upstream of early polyadenylation sites to prevent premature mRNA transcript cleavage and polyadenylation. Independently of SCAF4, also acts as a positive regulator of transcript elongation. This Rattus norvegicus (Rat) protein is SR-related and CTD-associated factor 8.